A 311-amino-acid polypeptide reads, in one-letter code: Methionyl-tRNA formyltransferase (311 aa).

Residue S110–P113 coordinates (6S)-5,6,7,8-tetrahydrofolate.

This sequence belongs to the Fmt family.

It carries out the reaction L-methionyl-tRNA(fMet) + (6R)-10-formyltetrahydrofolate = N-formyl-L-methionyl-tRNA(fMet) + (6S)-5,6,7,8-tetrahydrofolate + H(+). Functionally, attaches a formyl group to the free amino group of methionyl-tRNA(fMet). The formyl group appears to play a dual role in the initiator identity of N-formylmethionyl-tRNA by promoting its recognition by IF2 and preventing the misappropriation of this tRNA by the elongation apparatus. This Streptococcus pyogenes serotype M28 (strain MGAS6180) protein is Methionyl-tRNA formyltransferase.